The chain runs to 304 residues: D-alanine--D-alanine ligase (304 aa).

An ATP-grasp domain is found at 101–298; that stretch reads KKIFIKNKIL…FIKLIEWILK (198 aa). 131–184 provides a ligand contact to ATP; that stretch reads EKNLKFPVVVKPINEGSSVHVYICDKTNILKNLKVLKSYNEILIEEFIPGREIQ. Mg(2+) is bound by residues Asp253, Glu265, and Asn267.

The protein belongs to the D-alanine--D-alanine ligase family. Mg(2+) serves as cofactor. The cofactor is Mn(2+).

The protein resides in the cytoplasm. The enzyme catalyses 2 D-alanine + ATP = D-alanyl-D-alanine + ADP + phosphate + H(+). It participates in cell wall biogenesis; peptidoglycan biosynthesis. In terms of biological role, cell wall formation. The chain is D-alanine--D-alanine ligase from Pelagibacter ubique (strain HTCC1062).